A 394-amino-acid polypeptide reads, in one-letter code: Elongation factor Tu 1 (394 aa).

Positions 10 to 204 (KPHVNVGTIG…HLDTYIPEPE (195 aa)) constitute a tr-type G domain. The tract at residues 19–26 (GHVDHGKT) is G1. 19-26 (GHVDHGKT) contributes to the GTP binding site. Thr26 is a Mg(2+) binding site. Positions 60 to 64 (GITIN) are G2. A G3 region spans residues 81-84 (DCPG). Residues 81 to 85 (DCPGH) and 136 to 139 (NKCD) each bind GTP. The G4 stretch occupies residues 136–139 (NKCD). The interval 174-176 (SAL) is G5.

Belongs to the TRAFAC class translation factor GTPase superfamily. Classic translation factor GTPase family. EF-Tu/EF-1A subfamily. In terms of assembly, monomer.

It localises to the cytoplasm. The catalysed reaction is GTP + H2O = GDP + phosphate + H(+). Its function is as follows. GTP hydrolase that promotes the GTP-dependent binding of aminoacyl-tRNA to the A-site of ribosomes during protein biosynthesis. In Haemophilus influenzae (strain 86-028NP), this protein is Elongation factor Tu 1.